A 185-amino-acid polypeptide reads, in one-letter code: ATP synthase subunit b 2 (185 aa).

Residues 1-24 are disordered; it reads MADSHGNAKGATAHTEAGGGHKAP. The chain crosses the membrane as a helical span at residues 34-56; that stretch reads ASQLVSLTIAFVALYLISSRLAL.

The protein belongs to the ATPase B chain family. In terms of assembly, F-type ATPases have 2 components, F(1) - the catalytic core - and F(0) - the membrane proton channel. F(1) has five subunits: alpha(3), beta(3), gamma(1), delta(1), epsilon(1). F(0) has three main subunits: a(1), b(2) and c(10-14). The alpha and beta chains form an alternating ring which encloses part of the gamma chain. F(1) is attached to F(0) by a central stalk formed by the gamma and epsilon chains, while a peripheral stalk is formed by the delta and b chains.

It is found in the cell inner membrane. F(1)F(0) ATP synthase produces ATP from ADP in the presence of a proton or sodium gradient. F-type ATPases consist of two structural domains, F(1) containing the extramembraneous catalytic core and F(0) containing the membrane proton channel, linked together by a central stalk and a peripheral stalk. During catalysis, ATP synthesis in the catalytic domain of F(1) is coupled via a rotary mechanism of the central stalk subunits to proton translocation. In terms of biological role, component of the F(0) channel, it forms part of the peripheral stalk, linking F(1) to F(0). The b'-subunit is a diverged and duplicated form of b found in plants and photosynthetic bacteria. The protein is ATP synthase subunit b 2 (atpF2) of Nitrobacter hamburgensis (strain DSM 10229 / NCIMB 13809 / X14).